A 146-amino-acid polypeptide reads, in one-letter code: Urease accessory protein UreE 1 (146 aa).

This sequence belongs to the UreE family.

The protein resides in the cytoplasm. In terms of biological role, involved in urease metallocenter assembly. Binds nickel. Probably functions as a nickel donor during metallocenter assembly. The polypeptide is Urease accessory protein UreE 1 (Pseudomonas syringae pv. syringae (strain B728a)).